Here is a 180-residue protein sequence, read N- to C-terminus: Acireductone dioxygenase (180 aa).

Fe(2+)-binding residues include H97, H99, E103, and H141. Ni(2+) contacts are provided by H97, H99, E103, and H141.

It belongs to the acireductone dioxygenase (ARD) family. As to quaternary structure, monomer. Requires Fe(2+) as cofactor. Ni(2+) is required as a cofactor.

It catalyses the reaction 1,2-dihydroxy-5-(methylsulfanyl)pent-1-en-3-one + O2 = 3-(methylsulfanyl)propanoate + CO + formate + 2 H(+). It carries out the reaction 1,2-dihydroxy-5-(methylsulfanyl)pent-1-en-3-one + O2 = 4-methylsulfanyl-2-oxobutanoate + formate + 2 H(+). It functions in the pathway amino-acid biosynthesis; L-methionine biosynthesis via salvage pathway; L-methionine from S-methyl-5-thio-alpha-D-ribose 1-phosphate: step 5/6. Catalyzes 2 different reactions between oxygen and the acireductone 1,2-dihydroxy-3-keto-5-methylthiopentene (DHK-MTPene) depending upon the metal bound in the active site. Fe-containing acireductone dioxygenase (Fe-ARD) produces formate and 2-keto-4-methylthiobutyrate (KMTB), the alpha-ketoacid precursor of methionine in the methionine recycle pathway. Ni-containing acireductone dioxygenase (Ni-ARD) produces methylthiopropionate, carbon monoxide and formate, and does not lie on the methionine recycle pathway. The protein is Acireductone dioxygenase of Klebsiella pneumoniae subsp. pneumoniae (strain ATCC 700721 / MGH 78578).